Here is a 975-residue protein sequence, read N- to C-terminus: Protein HIRA (975 aa).

WD repeat units follow at residues 10–50 (RHEG…KDND), 64–103 (DHFG…GTSE), 123–162 (GHTA…CTAV), 165–204 (GHSS…LAHR), 214–256 (GSTF…ATFD), 259–331 (GHNA…PLFV), and 335–374 (FFTQ…LGYR). Residues 418-433 (KKVSSVQQFQSPPKVS) are compositionally biased toward low complexity. Disordered regions lie at residues 418 to 510 (KKVS…RSQN) and 948 to 975 (NVEQ…NGAS). Residues 435 to 445 (DAPNPSTSVPN) show a composition bias toward polar residues. Basic and acidic residues predominate over residues 478-492 (KQREYRRPDGRKRII). Residues 499–510 (PSNQDMSNRSQN) show a composition bias toward polar residues. Positions 923 to 954 (ATNRKVQRLLNEFMDLLSEYEAAETNVEQMDV) form a coiled coil.

Belongs to the WD repeat HIR1 family.

The protein resides in the nucleus. Its function is as follows. Histone chaperone involved in maintining knox genes silencing throughout leaf development. The polypeptide is Protein HIRA (Oryza sativa subsp. japonica (Rice)).